Reading from the N-terminus, the 453-residue chain is Bis(5'-adenosyl)-triphosphatase ENPP4 (453 aa).

The signal sequence occupies residues 1–18; sequence MKLLLMLLFSGLMTGCRG. The Extracellular segment spans residues 19-407; it reads NSSSASPPKL…DQWCINLPEA (389 aa). Residues Asp34 and Thr70 each coordinate Zn(2+). The AMP-threonine intermediate role is filled by Thr70. Positions 91 and 154 each coordinate substrate. Asn166 carries N-linked (GlcNAc...) asparagine glycosylation. 4 residues coordinate Zn(2+): Asp189, His193, Asp237, and His238. Asp189 serves as a coordination point for substrate. A disulfide bridge connects residues Cys254 and Cys287. N-linked (GlcNAc...) asparagine glycosylation is present at Asn276. His336 contributes to the Zn(2+) binding site. A disulfide bond links Cys394 and Cys401. The helical transmembrane segment at 408 to 428 threads the bilayer; sequence IGIVIGALLVLTTLTCLIIIM. The Cytoplasmic segment spans residues 429 to 453; the sequence is QNRVSGPRPFSRLQLQEDDDDPLIG.

Belongs to the nucleotide pyrophosphatase/phosphodiesterase family. Zn(2+) is required as a cofactor.

The protein resides in the cell membrane. It catalyses the reaction P(1),P(3)-bis(5'-adenosyl) triphosphate + H2O = AMP + ADP + 2 H(+). In terms of biological role, hydrolyzes extracellular Ap3A into AMP and ADP, and Ap4A into AMP and ATP. Ap3A and Ap4A are diadenosine polyphosphates thought to induce proliferation of vascular smooth muscle cells. Acts as a procoagulant, mediating platelet aggregation at the site of nascent thrombus via release of ADP from Ap3A and activation of ADP receptors. The polypeptide is Bis(5'-adenosyl)-triphosphatase ENPP4 (ENPP4) (Bos taurus (Bovine)).